The sequence spans 357 residues: MDEKEIKFIQDQIGYTFKNQELLVQAFTRRSYSMENGGQDNEVLEFIGDKALDFVVVKQLSEEFGHYSKKYQNWEKWGKTEETGTFISDLDEGELTEIKKQLVQKNTLADAIDNLGIAYYLIMGKGDVEKNIQDSLSVKEDLFEAILGAIALDSNWDIEALQDSMNVMLNPGELMFDEDVNYVAEIQAWSSANSGNIPLHCFYPTSMQGTWYMPRHHMCIYGKAEQDTHFACEVLIPGIDYHFVGYGRSKNLARMDASRLAYEYLKDEDMLFSIRDEIDDPNYNDSIGQLEILARRGYFSIPQYDFKETHDEDGNPVWNCKCSIKEKDTVTNGRSSSKKDAKKQAAYDMLTFVLEEE.

The RNase III domain occupies 6 to 155 (IKFIQDQIGY…ILGAIALDSN (150 aa)). Residue Glu-45 participates in Mg(2+) binding. The active site involves Asp-49. Residues Asp-141 and Glu-144 each coordinate Mg(2+). The active site involves Glu-144. 2 consecutive DRBM domains span residues 198–267 (PLHC…YLKD) and 285–355 (DSIG…FVLE).

The protein belongs to the ribonuclease III family. Homodimer. Requires Mg(2+) as cofactor.

The protein resides in the cytoplasm. It catalyses the reaction Endonucleolytic cleavage to 5'-phosphomonoester.. Digests double-stranded RNA. Involved in the processing of primary rRNA transcript to yield the immediate precursors to the large and small rRNAs (23S and 16S). Processes some mRNAs, and tRNAs when they are encoded in the rRNA operon. Processes pre-crRNA and tracrRNA of type II CRISPR loci if present in the organism. The chain is Ribonuclease 3 (rnc) from Roseburia hominis (strain DSM 16839 / JCM 17582 / NCIMB 14029 / A2-183).